Consider the following 351-residue polypeptide: N-acetyl-gamma-glutamyl-phosphate reductase (351 aa).

Cys154 is a catalytic residue.

The protein belongs to the NAGSA dehydrogenase family. Type 1 subfamily.

Its subcellular location is the cytoplasm. The catalysed reaction is N-acetyl-L-glutamate 5-semialdehyde + phosphate + NADP(+) = N-acetyl-L-glutamyl 5-phosphate + NADPH + H(+). The protein operates within amino-acid biosynthesis; L-arginine biosynthesis; N(2)-acetyl-L-ornithine from L-glutamate: step 3/4. Its function is as follows. Catalyzes the NADPH-dependent reduction of N-acetyl-5-glutamyl phosphate to yield N-acetyl-L-glutamate 5-semialdehyde. In Prochlorococcus marinus (strain AS9601), this protein is N-acetyl-gamma-glutamyl-phosphate reductase.